A 316-amino-acid chain; its full sequence is Ribose-phosphate pyrophosphokinase (316 aa).

Residues 37–39 (DGE) and 96–97 (RQ) contribute to the ATP site. 2 residues coordinate Mg(2+): His-130 and Asp-171. Lys-194 is an active-site residue. Residues Arg-196 and Asp-221 each coordinate D-ribose 5-phosphate.

Belongs to the ribose-phosphate pyrophosphokinase family. Class I subfamily. Homohexamer. Mg(2+) is required as a cofactor.

The protein resides in the cytoplasm. The enzyme catalyses D-ribose 5-phosphate + ATP = 5-phospho-alpha-D-ribose 1-diphosphate + AMP + H(+). It participates in metabolic intermediate biosynthesis; 5-phospho-alpha-D-ribose 1-diphosphate biosynthesis; 5-phospho-alpha-D-ribose 1-diphosphate from D-ribose 5-phosphate (route I): step 1/1. Functionally, involved in the biosynthesis of the central metabolite phospho-alpha-D-ribosyl-1-pyrophosphate (PRPP) via the transfer of pyrophosphoryl group from ATP to 1-hydroxyl of ribose-5-phosphate (Rib-5-P). The sequence is that of Ribose-phosphate pyrophosphokinase from Rhodopirellula baltica (strain DSM 10527 / NCIMB 13988 / SH1).